Here is a 119-residue protein sequence, read N- to C-terminus: Neuropeptide B (119 aa).

A signal peptide spans M1 to A21. Positions S53 to A119 are excised as a propeptide.

This sequence belongs to the neuropeptide B/W family. As to expression, detected in a variety of tissues. High levels are found in the lymphoid organs, central nervous system, mammary gland and uterus.

The protein localises to the secreted. Its function is as follows. May be involved in the regulation of feeding, neuroendocrine system, memory and learning. May be involved in the afferent pain pathway. The protein is Neuropeptide B (Npb) of Rattus norvegicus (Rat).